A 588-amino-acid chain; its full sequence is UvrABC system protein C (588 aa).

The GIY-YIG domain occupies 12 to 89; the sequence is SKPGCYLYLN…IKKYRPKYNV (78 aa). The region spanning 194–229 is the UVR domain; it reads NEVKTLLTNQMHKAAENLQFEEAQRIKEQIISLDFT.

The protein belongs to the UvrC family. As to quaternary structure, interacts with UvrB in an incision complex.

It localises to the cytoplasm. The UvrABC repair system catalyzes the recognition and processing of DNA lesions. UvrC both incises the 5' and 3' sides of the lesion. The N-terminal half is responsible for the 3' incision and the C-terminal half is responsible for the 5' incision. The polypeptide is UvrABC system protein C (Mesoplasma florum (strain ATCC 33453 / NBRC 100688 / NCTC 11704 / L1) (Acholeplasma florum)).